The primary structure comprises 142 residues: Protein spalt-accessory (142 aa).

An N-terminal signal peptide occupies residues 1 to 16 (MKLLIALFALVTAVNA). The tract at residues 75 to 142 (GFAGQGSPNQ…HHEHHGHHRH (68 aa)) is disordered. Residues 107 to 124 (GHFHENPHEYPEHHGDHH) show a composition bias toward basic and acidic residues. Residues 125 to 142 (REHHEHHGHHEHHGHHRH) show a composition bias toward basic residues.

It localises to the secreted. Functionally, likely to be involved in the establishment of the head. The chain is Protein spalt-accessory (sala) from Drosophila melanogaster (Fruit fly).